We begin with the raw amino-acid sequence, 373 residues long: GDSL esterase/lipase LIP-4 (373 aa).

The first 32 residues, 1-32 (MATLFLYSNTFSFFFITLVSLALLILRQPSRA), serve as a signal peptide directing secretion. The Nucleophile role is filled by Ser47. Residue Asn93 is glycosylated (N-linked (GlcNAc...) asparagine). Residues Asp339 and His342 contribute to the active site.

It belongs to the 'GDSL' lipolytic enzyme family.

It localises to the secreted. This Arabidopsis thaliana (Mouse-ear cress) protein is GDSL esterase/lipase LIP-4 (LIP4).